The chain runs to 417 residues: NADH-quinone oxidoreductase subunit D (417 aa).

It belongs to the complex I 49 kDa subunit family. As to quaternary structure, NDH-1 is composed of 14 different subunits. Subunits NuoB, C, D, E, F, and G constitute the peripheral sector of the complex.

It localises to the cell inner membrane. It carries out the reaction a quinone + NADH + 5 H(+)(in) = a quinol + NAD(+) + 4 H(+)(out). In terms of biological role, NDH-1 shuttles electrons from NADH, via FMN and iron-sulfur (Fe-S) centers, to quinones in the respiratory chain. The immediate electron acceptor for the enzyme in this species is believed to be ubiquinone. Couples the redox reaction to proton translocation (for every two electrons transferred, four hydrogen ions are translocated across the cytoplasmic membrane), and thus conserves the redox energy in a proton gradient. In Polaromonas naphthalenivorans (strain CJ2), this protein is NADH-quinone oxidoreductase subunit D.